Here is a 730-residue protein sequence, read N- to C-terminus: Wall-associated receptor kinase-like 1 (730 aa).

A signal peptide spans 1 to 25 (MKTKTSIFQFIVASVLTLLINDSSA). The Extracellular portion of the chain corresponds to 26–358 (ATPPPPISNS…KPTKPPVLQG (333 aa)). N-linked (GlcNAc...) asparagine glycans are attached at residues Asn-34, Asn-40, Asn-70, Asn-77, Asn-92, Asn-119, Asn-132, Asn-211, Asn-233, Asn-269, and Asn-281. Residues 282-341 (CSCEYDYFSGMSYRNCYCDYGYTGNPYLRGGCVDTDSCEGNHNCGEDAHCVNMPGPMSMC) are atypical EGF-like. 3 disulfide bridges follow: Cys-284/Cys-297, Cys-319/Cys-331, and Cys-325/Cys-341. A helical transmembrane segment spans residues 359-379 (ILIGLSGLVFFVGLFWLFKLI). The Cytoplasmic segment spans residues 380-730 (KKRRNINRSK…DQPMAINNKR (351 aa)). Residues 429–702 (FSIDRVLGQG…KEVSNELERI (274 aa)) enclose the Protein kinase domain. ATP contacts are provided by residues 435–443 (LGQGGQGTV) and Lys-457. Residue Tyr-502 is modified to Phosphotyrosine. Catalysis depends on Asp-554, which acts as the Proton acceptor. 2 positions are modified to phosphothreonine: Thr-588 and Thr-593. Tyr-601 is modified (phosphotyrosine). The segment at 685-730 (KGKNRPNMKEVSNELERIRSSPEDLDVRTENEDEEEDQPMAINNKR) is disordered. Over residues 691 to 714 (NMKEVSNELERIRSSPEDLDVRTE) the composition is skewed to basic and acidic residues.

Belongs to the protein kinase superfamily. Ser/Thr protein kinase family. Preferentially expressed in roots and flowers.

It localises to the membrane. It catalyses the reaction L-seryl-[protein] + ATP = O-phospho-L-seryl-[protein] + ADP + H(+). The catalysed reaction is L-threonyl-[protein] + ATP = O-phospho-L-threonyl-[protein] + ADP + H(+). Its function is as follows. Serine/threonine-protein kinase that may function as a signaling receptor of extracellular matrix component. This chain is Wall-associated receptor kinase-like 1 (WAKL1), found in Arabidopsis thaliana (Mouse-ear cress).